A 287-amino-acid chain; its full sequence is Alpha-tubulin N-acetyltransferase 2 (287 aa).

Residues 2–193 (VEFAFDIKHL…NNFVLYEGFF (192 aa)) enclose the N-acetyltransferase domain. Residues 127–140 (FYVHESRQRCGQGK) and 163–172 (SNKMLAFMAK) contribute to the acetyl-CoA site.

It belongs to the acetyltransferase ATAT1 family.

It localises to the midbody. It is found in the midbody ring. The catalysed reaction is L-lysyl-[alpha-tubulin] + acetyl-CoA = N(6)-acetyl-L-lysyl-[alpha-tubulin] + CoA + H(+). In terms of biological role, specifically acetylates 'Lys-40' in alpha-tubulin on the lumenal side of microtubules. Promotes microtubule destabilization and accelerates microtubule dynamics; this activity may be independent of acetylation activity. Acetylates alpha-tubulin with a slow enzymatic rate, due to a catalytic site that is not optimized for acetyl transfer. Enters the microtubule through each end and diffuses quickly throughout the lumen of microtubules. Acetylates only long/old microtubules because of its slow acetylation rate since it does not have time to act on dynamically unstable microtubules before the enzyme is released. Main acetyltransferase responsible for alpha-tubulin 'Lys-40' acetylation in germline cells during the early stages of oogenesis. Required for normal egg chamber separation. This Drosophila melanogaster (Fruit fly) protein is Alpha-tubulin N-acetyltransferase 2.